Consider the following 621-residue polypeptide: tRNA uridine 5-carboxymethylaminomethyl modification enzyme MnmG (621 aa).

17-22 (GGGHAG) provides a ligand contact to FAD. Position 276-290 (276-290 (GPRYCPSIEDKIMKF)) interacts with NAD(+).

Belongs to the MnmG family. In terms of assembly, homodimer. Heterotetramer of two MnmE and two MnmG subunits. FAD is required as a cofactor.

The protein resides in the cytoplasm. Its function is as follows. NAD-binding protein involved in the addition of a carboxymethylaminomethyl (cmnm) group at the wobble position (U34) of certain tRNAs, forming tRNA-cmnm(5)s(2)U34. This Zymomonas mobilis subsp. mobilis (strain ATCC 31821 / ZM4 / CP4) protein is tRNA uridine 5-carboxymethylaminomethyl modification enzyme MnmG.